We begin with the raw amino-acid sequence, 691 residues long: DNA-directed RNA polymerase subunit beta' (691 aa).

The Zn(2+) site is built by cysteine 69, cysteine 71, cysteine 87, and cysteine 90. Residues aspartate 489, aspartate 491, and aspartate 493 each coordinate Mg(2+).

It belongs to the RNA polymerase beta' chain family. RpoC1 subfamily. In plastids the minimal PEP RNA polymerase catalytic core is composed of four subunits: alpha, beta, beta', and beta''. When a (nuclear-encoded) sigma factor is associated with the core the holoenzyme is formed, which can initiate transcription. Mg(2+) serves as cofactor. Requires Zn(2+) as cofactor.

The protein resides in the plastid. Its subcellular location is the chloroplast. The catalysed reaction is RNA(n) + a ribonucleoside 5'-triphosphate = RNA(n+1) + diphosphate. Its function is as follows. DNA-dependent RNA polymerase catalyzes the transcription of DNA into RNA using the four ribonucleoside triphosphates as substrates. The sequence is that of DNA-directed RNA polymerase subunit beta' from Jasminum nudiflorum (Winter jasmine).